The following is a 401-amino-acid chain: Homocysteine-responsive endoplasmic reticulum-resident ubiquitin-like domain member 2 protein (401 aa).

Positions 10-89 (VTLIIKAPNQ…HMVHLVCASR (80 aa)) constitute a Ubiquitin-like domain. A disordered region spans residues 87 to 137 (ASRSPPSSPKSSTDGESHGALASSTNSNSDHSDSTTPSPSQESLSLVAGSS). Low complexity-rich tracts occupy residues 88–98 (SRSPPSSPKSS) and 109–126 (SSTN…PSPS). Residues 299 to 319 (FIMVMGAMLLVYLHQAGWFPF) form a helical membrane-spanning segment.

Its subcellular location is the membrane. Functionally, could be involved in the unfolded protein response (UPR) pathway. This is Homocysteine-responsive endoplasmic reticulum-resident ubiquitin-like domain member 2 protein (Herpud2) from Rattus norvegicus (Rat).